Reading from the N-terminus, the 392-residue chain is Major outer membrane protein P.IA (392 aa).

The first 19 residues, 1–19 (MRKKLTALVLSALPLAAVA), serve as a signal peptide directing secretion.

Belongs to the Gram-negative porin family. Homotrimer.

It localises to the cell outer membrane. In terms of biological role, serves as a slightly cation selective porin. Major antigen on the gonococcal cell surface and it may have pathogenic properties in addition to its porin activity. In Neisseria meningitidis serogroup B / serotype 15 (strain H44/76), this protein is Major outer membrane protein P.IA (porA).